A 78-amino-acid chain; its full sequence is Beta-defensin 105A (78 aa).

An N-terminal signal peptide occupies residues 1 to 27 (MALIRKTFYFLFAVFFILVQLPSGCQA). Intrachain disulfides connect Cys43–Cys74, Cys53–Cys67, and Cys57–Cys73.

This sequence belongs to the beta-defensin family.

The protein localises to the secreted. In terms of biological role, has antimicrobial activity. The polypeptide is Beta-defensin 105A (DEFB105A) (Gorilla gorilla gorilla (Western lowland gorilla)).